The sequence spans 98 residues: Co-chaperonin GroES (98 aa).

It belongs to the GroES chaperonin family. Heptamer of 7 subunits arranged in a ring. Interacts with the chaperonin GroEL.

It is found in the cytoplasm. Functionally, together with the chaperonin GroEL, plays an essential role in assisting protein folding. The GroEL-GroES system forms a nano-cage that allows encapsulation of the non-native substrate proteins and provides a physical environment optimized to promote and accelerate protein folding. GroES binds to the apical surface of the GroEL ring, thereby capping the opening of the GroEL channel. This chain is Co-chaperonin GroES, found in Allorhizobium ampelinum (strain ATCC BAA-846 / DSM 112012 / S4) (Agrobacterium vitis (strain S4)).